The following is a 478-amino-acid chain: Ribosomal RNA small subunit methyltransferase F (478 aa).

S-adenosyl-L-methionine contacts are provided by residues 123–129 (AAAPGSK), Glu-147, Asp-174, and Asp-192. The active-site Nucleophile is the Cys-245.

It belongs to the class I-like SAM-binding methyltransferase superfamily. RsmB/NOP family.

The protein resides in the cytoplasm. It carries out the reaction cytidine(1407) in 16S rRNA + S-adenosyl-L-methionine = 5-methylcytidine(1407) in 16S rRNA + S-adenosyl-L-homocysteine + H(+). Specifically methylates the cytosine at position 1407 (m5C1407) of 16S rRNA. This Vibrio parahaemolyticus serotype O3:K6 (strain RIMD 2210633) protein is Ribosomal RNA small subunit methyltransferase F.